A 507-amino-acid chain; its full sequence is ATP synthase subunit alpha (507 aa).

171-178 (GDRQTGKT) lines the ATP pocket.

Belongs to the ATPase alpha/beta chains family. In terms of assembly, F-type ATPases have 2 components, CF(1) - the catalytic core - and CF(0) - the membrane proton channel. CF(1) has five subunits: alpha(3), beta(3), gamma(1), delta(1), epsilon(1). CF(0) has three main subunits: a(1), b(2) and c(9-12). The alpha and beta chains form an alternating ring which encloses part of the gamma chain. CF(1) is attached to CF(0) by a central stalk formed by the gamma and epsilon chains, while a peripheral stalk is formed by the delta and b chains.

The protein resides in the cell inner membrane. The enzyme catalyses ATP + H2O + 4 H(+)(in) = ADP + phosphate + 5 H(+)(out). Produces ATP from ADP in the presence of a proton gradient across the membrane. The alpha chain is a regulatory subunit. In Bdellovibrio bacteriovorus (strain ATCC 15356 / DSM 50701 / NCIMB 9529 / HD100), this protein is ATP synthase subunit alpha.